The following is a 172-amino-acid chain: Glutamyl-tRNA(Gln) amidotransferase subunit C-3, mitochondrial (172 aa).

A disordered region spans residues lysine 49–arginine 71. Positions proline 58–arginine 71 are enriched in polar residues.

This sequence belongs to the GatC family. As to quaternary structure, subunit of the heterotrimeric GatCAB amidotransferase (AdT) complex, composed of A, B and C subunits.

The protein resides in the mitochondrion. It carries out the reaction L-glutamyl-tRNA(Gln) + L-glutamine + ATP + H2O = L-glutaminyl-tRNA(Gln) + L-glutamate + ADP + phosphate + H(+). Functionally, allows the formation of correctly charged Gln-tRNA(Gln) through the transamidation of misacylated Glu-tRNA(Gln) in the mitochondria. The reaction takes place in the presence of glutamine and ATP through an activated gamma-phospho-Glu-tRNA(Gln). This chain is Glutamyl-tRNA(Gln) amidotransferase subunit C-3, mitochondrial, found in Culex quinquefasciatus (Southern house mosquito).